Consider the following 616-residue polypeptide: UvrABC system protein C (616 aa).

The region spanning 21–100 is the GIY-YIG domain; sequence TCPGVYQFKN…IKDLKPRYNI (80 aa). The region spanning 214–249 is the UVR domain; that stretch reads GALIRTLSAEMHRYADELRFEEAAELKIQIEGLRKY.

This sequence belongs to the UvrC family. In terms of assembly, interacts with UvrB in an incision complex.

The protein resides in the cytoplasm. The UvrABC repair system catalyzes the recognition and processing of DNA lesions. UvrC both incises the 5' and 3' sides of the lesion. The N-terminal half is responsible for the 3' incision and the C-terminal half is responsible for the 5' incision. The chain is UvrABC system protein C from Prosthecochloris aestuarii (strain DSM 271 / SK 413).